A 379-amino-acid chain; its full sequence is Succinyl-diaminopimelate desuccinylase (379 aa).

His-70 is a Zn(2+) binding site. Asp-72 is a catalytic residue. Position 103 (Asp-103) interacts with Zn(2+). Catalysis depends on Glu-137, which acts as the Proton acceptor. Glu-138, Glu-166, and His-352 together coordinate Zn(2+).

Belongs to the peptidase M20A family. DapE subfamily. As to quaternary structure, homodimer. Requires Zn(2+) as cofactor. Co(2+) is required as a cofactor.

It catalyses the reaction N-succinyl-(2S,6S)-2,6-diaminopimelate + H2O = (2S,6S)-2,6-diaminopimelate + succinate. Its pathway is amino-acid biosynthesis; L-lysine biosynthesis via DAP pathway; LL-2,6-diaminopimelate from (S)-tetrahydrodipicolinate (succinylase route): step 3/3. Catalyzes the hydrolysis of N-succinyl-L,L-diaminopimelic acid (SDAP), forming succinate and LL-2,6-diaminopimelate (DAP), an intermediate involved in the bacterial biosynthesis of lysine and meso-diaminopimelic acid, an essential component of bacterial cell walls. The protein is Succinyl-diaminopimelate desuccinylase of Paraburkholderia xenovorans (strain LB400).